Reading from the N-terminus, the 206-residue chain is uncharacterized protein (206 aa).

This is an uncharacterized protein from Aquifex aeolicus (strain VF5).